The following is a 399-amino-acid chain: Bone morphogenetic protein 8B (399 aa).

The first 19 residues, Met1 to Gly19, serve as a signal peptide directing secretion. Positions Gly20–Arg260 are excised as a propeptide. Asn155 and Asn340 each carry an N-linked (GlcNAc...) asparagine glycan. Cystine bridges form between Cys298–Cys364, Cys327–Cys396, and Cys331–Cys398.

This sequence belongs to the TGF-beta family. In terms of assembly, homodimer; disulfide-linked. In terms of tissue distribution, expressed in testis. Expressed in decidual cells of the uterus and in trophoblast cells of the labyrinthine region of the placenta and in the inner root sheath of hair follicles of early postnatal skin. Expressed in the extraembryonic ectoderm in pregastrula and gastrula stage mouse embryos. Expressed in brown adipose tissue and brain.

It is found in the secreted. Its function is as follows. Induces cartilage and bone formation. May be the osteoinductive factor responsible for the phenomenon of epithelial osteogenesis. Plays a role in calcium regulation and bone homeostasis. Involved in the generation of primordial germ cells; this function involves Bmp4 in a synergistic manner though separate receptor complexes seem to be involved. Required for the initiation and maintenance of spermatogenesis. Signaling protein involved in regulation of thermogenesis and energy balance. Proposed to increase the peripheral response of brown adipose tissue (BAT) to adrenergic stimulation while acting centrally in the hypothalamus to increase sympathetic output to BAT. This chain is Bone morphogenetic protein 8B (Bmp8b), found in Mus musculus (Mouse).